A 598-amino-acid chain; its full sequence is Thiol:disulfide interchange protein DsbD (598 aa).

The N-terminal stretch at 1–19 (MAYRIITLILLLCSTSATA) is a signal peptide. Residues C122 and C128 are joined by a disulfide bond. Residues 147–187 (DGQATAIEPMPSTSSRPAFNPPLPVEPRPAPELATSPAPAA) form a disordered region. Residues 165-176 (FNPPLPVEPRPA) are compositionally biased toward pro residues. 7 consecutive transmembrane segments (helical) span residues 197 to 217 (LPFT…TPCV), 242 to 262 (LLAF…GLVV), 277 to 297 (YVLV…FGLF), 330 to 350 (IAGL…LLYI), 356 to 376 (LWLG…PLIL), 391 to 411 (WMSH…VFLL), and 423 to 443 (LWSM…LGAT). Cysteines 216 and 338 form a disulfide. Residues 459–598 (LVSARPLQDW…FSAHLRDWQA (140 aa)) form the Thioredoxin domain. C513 and C516 are joined by a disulfide.

The protein belongs to the thioredoxin family. DsbD subfamily.

The protein localises to the cell inner membrane. The enzyme catalyses [protein]-dithiol + NAD(+) = [protein]-disulfide + NADH + H(+). The catalysed reaction is [protein]-dithiol + NADP(+) = [protein]-disulfide + NADPH + H(+). Required to facilitate the formation of correct disulfide bonds in some periplasmic proteins and for the assembly of the periplasmic c-type cytochromes. Acts by transferring electrons from cytoplasmic thioredoxin to the periplasm. This transfer involves a cascade of disulfide bond formation and reduction steps. The sequence is that of Thiol:disulfide interchange protein DsbD from Klebsiella pneumoniae subsp. pneumoniae (strain ATCC 700721 / MGH 78578).